Consider the following 167-residue polypeptide: Large ribosomal subunit protein uL10 (167 aa).

This sequence belongs to the universal ribosomal protein uL10 family. Part of the ribosomal stalk of the 50S ribosomal subunit. The N-terminus interacts with L11 and the large rRNA to form the base of the stalk. The C-terminus forms an elongated spine to which L12 dimers bind in a sequential fashion forming a multimeric L10(L12)X complex.

Forms part of the ribosomal stalk, playing a central role in the interaction of the ribosome with GTP-bound translation factors. The protein is Large ribosomal subunit protein uL10 of Streptococcus thermophilus (strain CNRZ 1066).